The chain runs to 110 residues: NADH-quinone oxidoreductase subunit K (110 aa).

The next 3 helical transmembrane spans lie at 14-34 (VSQYFILSFILLGIGLFGMMV), 39-59 (ITILMSLELALNSVNIAFVGI), and 70-90 (IFALFTIALAAAEAAVGLGII).

The protein belongs to the complex I subunit 4L family. NDH-1 is composed of 14 different subunits. Subunits NuoA, H, J, K, L, M, N constitute the membrane sector of the complex.

The protein localises to the cell inner membrane. The catalysed reaction is a quinone + NADH + 5 H(+)(in) = a quinol + NAD(+) + 4 H(+)(out). In terms of biological role, NDH-1 shuttles electrons from NADH, via FMN and iron-sulfur (Fe-S) centers, to quinones in the respiratory chain. The immediate electron acceptor for the enzyme in this species is believed to be ubiquinone. Couples the redox reaction to proton translocation (for every two electrons transferred, four hydrogen ions are translocated across the cytoplasmic membrane), and thus conserves the redox energy in a proton gradient. The sequence is that of NADH-quinone oxidoreductase subunit K from Hydrogenobaculum sp. (strain Y04AAS1).